Here is a 252-residue protein sequence, read N- to C-terminus: Adaptation to cold protein B (252 aa).

In terms of assembly, interacts with AtcC, but not with AtcA and AtcJ. Interacts with the RNA polymerase subunits RpoB and RpoC.

Functionally, involved in cold adaptation. Directly interacts with the RNA polymerase and decreases its activity. May direct the DnaK chaperone to the RNA polymerase to sustain life at low temperatures. Overproduction prevents bacterial growth due to RNA polymerase inhibition. This is Adaptation to cold protein B from Shewanella oneidensis (strain ATCC 700550 / JCM 31522 / CIP 106686 / LMG 19005 / NCIMB 14063 / MR-1).